The primary structure comprises 375 residues: Zinc finger CCCH domain-containing protein 57 (375 aa).

5 consecutive C3H1-type zinc fingers follow at residues 42–70, 87–115, 133–161, 243–271, and 289–317; these read RHGE…HPHD, RIGQ…HPRN, RPNE…HPQT, RPGQ…HPRD, and RPGE…HPMR. Positions 352-375 are disordered; sequence SVEAKPTSLPETTSAKDTIVDAQH.

The protein localises to the nucleus. The protein is Zinc finger CCCH domain-containing protein 57 (ZFN3) of Arabidopsis thaliana (Mouse-ear cress).